The following is a 60-amino-acid chain: Large ribosomal subunit protein uL30 (60 aa).

It belongs to the universal ribosomal protein uL30 family. As to quaternary structure, part of the 50S ribosomal subunit.

The sequence is that of Large ribosomal subunit protein uL30 from Streptococcus thermophilus (strain CNRZ 1066).